Here is a 190-residue protein sequence, read N- to C-terminus: dTTP/UTP pyrophosphatase (190 aa).

Asp68 acts as the Proton acceptor in catalysis.

It belongs to the Maf family. YhdE subfamily. A divalent metal cation serves as cofactor.

The protein localises to the cytoplasm. It catalyses the reaction dTTP + H2O = dTMP + diphosphate + H(+). It carries out the reaction UTP + H2O = UMP + diphosphate + H(+). In terms of biological role, nucleoside triphosphate pyrophosphatase that hydrolyzes dTTP and UTP. May have a dual role in cell division arrest and in preventing the incorporation of modified nucleotides into cellular nucleic acids. This chain is dTTP/UTP pyrophosphatase, found in Acholeplasma laidlawii (strain PG-8A).